Reading from the N-terminus, the 259-residue chain is ATP synthase subunit a 1 (259 aa).

Helical transmembrane passes span Thr30 to Phe50, Leu90 to Leu110, Asp135 to Leu155, Leu209 to Trp229, and Ala230 to Val250.

This sequence belongs to the ATPase A chain family. As to quaternary structure, F-type ATPases have 2 components, CF(1) - the catalytic core - and CF(0) - the membrane proton channel. CF(1) has five subunits: alpha(3), beta(3), gamma(1), delta(1), epsilon(1). CF(0) has three main subunits: a(1), b(2) and c(9-12). The alpha and beta chains form an alternating ring which encloses part of the gamma chain. CF(1) is attached to CF(0) by a central stalk formed by the gamma and epsilon chains, while a peripheral stalk is formed by the delta and b chains.

It localises to the cell inner membrane. Its function is as follows. Key component of the proton channel; it plays a direct role in the translocation of protons across the membrane. The sequence is that of ATP synthase subunit a 1 from Methylococcus capsulatus (strain ATCC 33009 / NCIMB 11132 / Bath).